Consider the following 412-residue polypeptide: MSELLLPPEHRYAKIIKERHNEDGSELSVLNLGPTHPATHGIFQNILLMDGERILEAEPTIGYIHRAFEKIAENRPFYQITPLTDRMNYCSSPINNMGWWMTLEKLLGIEVPKRAQYLRVIVMELARITDHIICNSILGVDTGAYTGFLYVFQFREKIYEIYEEICGARLTTNMGRIGGFERDWSPEAFRKLDKFLEEFPPAWKEFENLFERNRIFLDRTVNVGGITAEKAMAYGFTGPNLRAAGVDYDVRVAHPYSSYEDFDFIVPVGKSGDTYDRFCVRNAEVWESLSIIRQALEKMPAGNEYHAEVPDYYLPPKEDVYNSMESLIYHFKIVMGEVPVPVSEIYHAVEGGNGELGFYLATDGSRTPYRLHFRRPCFIYYQAFPEMIKGALLSDAIIILSSLNVIAGELDA.

Belongs to the complex I 49 kDa subunit family. As to quaternary structure, NDH-1 is composed of 14 different subunits. Subunits NuoB, C, D, E, F, and G constitute the peripheral sector of the complex.

It is found in the cell inner membrane. The enzyme catalyses a quinone + NADH + 5 H(+)(in) = a quinol + NAD(+) + 4 H(+)(out). Its function is as follows. NDH-1 shuttles electrons from NADH, via FMN and iron-sulfur (Fe-S) centers, to quinones in the respiratory chain. The immediate electron acceptor for the enzyme in this species is believed to be a menaquinone. Couples the redox reaction to proton translocation (for every two electrons transferred, four hydrogen ions are translocated across the cytoplasmic membrane), and thus conserves the redox energy in a proton gradient. This is NADH-quinone oxidoreductase subunit D from Flavobacterium johnsoniae (strain ATCC 17061 / DSM 2064 / JCM 8514 / BCRC 14874 / CCUG 350202 / NBRC 14942 / NCIMB 11054 / UW101) (Cytophaga johnsonae).